A 437-amino-acid polypeptide reads, in one-letter code: Ribosomal protein uS12 methylthiotransferase RimO (437 aa).

One can recognise an MTTase N-terminal domain in the interval 4–114 (PRISFVSLGC…VIEAVHTAIP (111 aa)). Positions 13, 49, 78, 145, 149, and 152 each coordinate [4Fe-4S] cluster. One can recognise a Radical SAM core domain in the interval 131 to 369 (LTPRHYAYLK…MAKQQQISTH (239 aa)). One can recognise a TRAM domain in the interval 372–437 (KKKIGKRLQV…DAYDLYGIAV (66 aa)).

It belongs to the methylthiotransferase family. RimO subfamily. It depends on [4Fe-4S] cluster as a cofactor.

It localises to the cytoplasm. It carries out the reaction L-aspartate(89)-[ribosomal protein uS12]-hydrogen + (sulfur carrier)-SH + AH2 + 2 S-adenosyl-L-methionine = 3-methylsulfanyl-L-aspartate(89)-[ribosomal protein uS12]-hydrogen + (sulfur carrier)-H + 5'-deoxyadenosine + L-methionine + A + S-adenosyl-L-homocysteine + 2 H(+). Functionally, catalyzes the methylthiolation of an aspartic acid residue of ribosomal protein uS12. The protein is Ribosomal protein uS12 methylthiotransferase RimO of Bartonella tribocorum (strain CIP 105476 / IBS 506).